The primary structure comprises 20 residues: ISSRVSXLTIHPLRNIMDML.

This sequence belongs to the peptidase A1 family. Glycosylated.

The protein resides in the secreted. In Ovis aries (Sheep), this protein is Pregnancy-associated glycoprotein 57.